Reading from the N-terminus, the 357-residue chain is Peptide chain release factor 1 (357 aa).

Q236 carries the N5-methylglutamine modification.

The protein belongs to the prokaryotic/mitochondrial release factor family. Post-translationally, methylated by PrmC. Methylation increases the termination efficiency of RF1.

Its subcellular location is the cytoplasm. Functionally, peptide chain release factor 1 directs the termination of translation in response to the peptide chain termination codons UAG and UAA. This is Peptide chain release factor 1 from Mycolicibacterium paratuberculosis (strain ATCC BAA-968 / K-10) (Mycobacterium paratuberculosis).